Consider the following 516-residue polypeptide: MEGSVLTLVLLAALVVCGSWGLNEEERLIRHLFEEKAYNKELRPAAHKESVEISLALTLSNLISLKEVEETLTTNVWIEQGWTDSRLQWDAEDFGNISVLRLPADMVWLPEIVLENNNDGSFQISYSCNVLIYPSGSVYWLPPAIFRSSCPISVTYFPFDWQNCSLKFSSLKYTTKEITLSLKQAEEDGRSYPVEWIIIDPEGFTENGEWEIVHRPARVNVDPSVPLDSPNRQDVTFYLIIRRKPLFYVINILVPCVLISFMINLVFYLPADCGEKTSMAISVLLAQSVFLLLISKRLPATSMAIPLIGKFLLFGMVLVTMVVVICVIVLNIHFRTPSTHVLSEPVKKLFLETLPEILHMSRPAEDGPSPGTLIRRSSSLGYISKAEEYFSLKSRSDLMFEKQSERHGLARRLTTARRPPAGSEQAQQELFSELKPAVDGANFIVNHMKDQNNYNEEKDCWNRVARTVDRLCLFVVTPIMVVGTAWIFLQGAYNQPPPQPFPGDPFSYLEKDKRFI.

Residues 1 to 21 (MEGSVLTLVLLAALVVCGSWG) form the signal peptide. Residues 22–244 (LNEEERLIRH…VTFYLIIRRK (223 aa)) are Extracellular-facing. N-linked (GlcNAc...) asparagine glycosylation is found at N96 and N163. The cysteines at positions 150 and 164 are disulfide-linked. The next 3 helical transmembrane spans lie at 245-269 (PLFY…VFYL), 279-296 (MAIS…LISK), and 311-332 (FLLF…VLNI). Residues 333 to 470 (HFRTPSTHVL…WNRVARTVDR (138 aa)) lie on the Cytoplasmic side of the membrane. Y389 is modified (phosphotyrosine; by Tyr-kinases). The helical transmembrane segment at 471 to 493 (LCLFVVTPIMVVGTAWIFLQGAY) threads the bilayer.

Belongs to the ligand-gated ion channel (TC 1.A.9) family. Acetylcholine receptor (TC 1.A.9.1) subfamily. Delta/CHRND sub-subfamily. Pentamer of two alpha chains, and one each of the beta, delta, and gamma (in immature muscle) or epsilon (in mature muscle) chains. The muscle heteropentamer composed of alpha-1, beta-1, delta, epsilon subunits interacts with the alpha-conotoxin ImII.

It is found in the postsynaptic cell membrane. The protein localises to the cell membrane. It catalyses the reaction K(+)(in) = K(+)(out). It carries out the reaction Na(+)(in) = Na(+)(out). In terms of biological role, after binding acetylcholine, the AChR responds by an extensive change in conformation that affects all subunits and leads to opening of an ion-conducting channel across the plasma membrane. This chain is Acetylcholine receptor subunit delta (CHRND), found in Bos taurus (Bovine).